Reading from the N-terminus, the 404-residue chain is Cysteine desulfurase IscS (404 aa).

Pyridoxal 5'-phosphate is bound by residues 75–76 (AT), Asn155, Gln183, and 203–205 (SAH). The residue at position 206 (Lys206) is an N6-(pyridoxal phosphate)lysine. Pyridoxal 5'-phosphate is bound at residue Thr243. Catalysis depends on Cys328, which acts as the Cysteine persulfide intermediate. Cys328 contacts [2Fe-2S] cluster.

It belongs to the class-V pyridoxal-phosphate-dependent aminotransferase family. NifS/IscS subfamily. Homodimer. Forms a heterotetramer with IscU, interacts with other sulfur acceptors. The cofactor is pyridoxal 5'-phosphate.

The protein localises to the cytoplasm. The enzyme catalyses (sulfur carrier)-H + L-cysteine = (sulfur carrier)-SH + L-alanine. The protein operates within cofactor biosynthesis; iron-sulfur cluster biosynthesis. Its function is as follows. Master enzyme that delivers sulfur to a number of partners involved in Fe-S cluster assembly, tRNA modification or cofactor biosynthesis. Catalyzes the removal of elemental sulfur atoms from cysteine to produce alanine. Functions as a sulfur delivery protein for Fe-S cluster synthesis onto IscU, an Fe-S scaffold assembly protein, as well as other S acceptor proteins. This Neisseria gonorrhoeae (strain ATCC 700825 / FA 1090) protein is Cysteine desulfurase IscS.